The primary structure comprises 415 residues: Zinc finger protein ZFMSA12A (415 aa).

A disordered region spans residues 1 to 36 (MGIQDARWPSEDEETHLLDSSSAEQTRGEKCSDSTP). C2H2-type zinc fingers lie at residues 78 to 100 (HKCTQCGKCFIYRYELLEHQRLH), 106 to 129 (YRCSQCGKAFRRTSDLSSHRRTQC), 134 to 156 (YICIKCGNSFQSIQEKFRHQCVH), 161 to 183 (FDCSQCGKSFKKMHLLGKHELTH), 189 to 211 (FTCRQCGKVYPGMSELRSHQKIH), 217 to 239 (NQCMQCGKFFSSSACLTAHEVRH), 245 to 267 (QICARCGKAFKNKHDLNLHMRSH), 273 to 295 (FQCTYCGKRFSVSGNLNIHVRTH), 301 to 323 (YLCSDCGKAFISAGELQIHRRTH), 329 to 351 (YKCSVCGRGFTMASKVTLHMRVH), 357 to 379 (YVCSECGKGFSRGSELKKHSMNH), and 385 to 407 (YACQLCAKTYTCLNHLKRHLKTH).

It localises to the nucleus. This Micropterus salmoides (Largemouth bass) protein is Zinc finger protein ZFMSA12A.